The chain runs to 412 residues: D-nopaline dehydrogenase (412 aa).

It belongs to the lysopine/nopaline/octopine/opine/vitopine dehydrogenases family. In terms of assembly, homotetramer.

It carries out the reaction D-nopaline + NADP(+) + H2O = L-arginine + 2-oxoglutarate + NADPH + H(+). In Agrobacterium vitis (Rhizobium vitis), this protein is D-nopaline dehydrogenase (nos).